Here is a 1038-residue protein sequence, read N- to C-terminus: GTPase-activating Rap/Ran-GAP domain-like protein 3 (1038 aa).

Phosphoserine is present on residues Lys-6 and Ser-68. A Rap-GAP domain is found at 214–430 (LLVLEEQEGS…RTLDMLIRSL (217 aa)). Ser-449 and Ser-455 each carry phosphoserine. Residues 512-824 (PHEAVCADPW…QLVASRSDIY (313 aa)) form the CNH domain. Disordered stretches follow at residues 833-863 (EGSSGGSSKGASAHTSPQTPPARDTPLFPSS) and 937-1038 (LLGL…IDLK). Thr-851 carries the post-translational modification Phosphothreonine. A compositionally biased stretch (polar residues) spans 1019 to 1028 (SGSSPFQLMA).

It belongs to the GARNL3 family.

The sequence is that of GTPase-activating Rap/Ran-GAP domain-like protein 3 (Garnl3) from Mus musculus (Mouse).